The following is a 549-amino-acid chain: Cytochrome bc1 complex cytochrome b subunit (549 aa).

Residues 54-74 traverse the membrane as a helical segment; the sequence is VCLYSFIIIILTGVYLTLFFH. His118 and His132 together coordinate heme. 3 helical membrane passes run 122–142, 150–170, and 182–202; these read ALIFLAGMFVHMMRVFFTGAF, WLFGFLLLVLGMFTGFTGYSL, and FMEGAILSVPIVGTYISFFLF. Heme-binding residues include His219 and His234. Transmembrane regions (helical) follow at residues 220–240, 269–289, 334–354, 389–409, and 417–437; these read ILLLPGIMLGLLVGHLILVFY, AGGFFFLVFGVISVVSAIATI, LVLGVFVPLLIFPLVLAAIAV, FGVAWLTVYFVLLIGGGNDLW, and INAITWFVRIAFFVGPVVAFI.

This sequence belongs to the cytochrome b family. As to quaternary structure, the cytochrome bc1 complex is composed of a cytochrome b (QcrB), the Rieske iron-sulfur protein (QcrA) and a diheme cytochrome c (QcrC) subunit. Heme is required as a cofactor.

The protein localises to the cell membrane. The enzyme catalyses a quinol + 2 Fe(III)-[cytochrome c](out) = a quinone + 2 Fe(II)-[cytochrome c](out) + 2 H(+)(out). In terms of biological role, cytochrome b subunit of the cytochrome bc1 complex, an essential component of the respiratory electron transport chain required for ATP synthesis. The bc1 complex catalyzes the oxidation of ubiquinol and the reduction of cytochrome c in the respiratory chain. The bc1 complex operates through a Q-cycle mechanism that couples electron transfer to generation of the proton gradient that drives ATP synthesis. The cytochrome b subunit contains two ubiquinol reactive sites: the oxidation (QP) site and the reduction (QN) site. The chain is Cytochrome bc1 complex cytochrome b subunit (qcrB) from Streptomyces lividans.